The primary structure comprises 394 residues: Muscle cell intermediate filament protein AV71 (394 aa).

Residues 1 to 73 (AEINLVRRRV…RVHDQEITEL (73 aa)) form a coil 1B region. The region spanning 1 to 239 (AEINLVRRRV…KMLEGEENRA (239 aa)) is the IF rod domain. A linker 12 region spans residues 74-91 (QAMAARDTTPENREYFKN). The tract at residues 92 to 239 (ELSSAIRDIR…KMLEGEENRA (148 aa)) is coil 2. The tail stretch occupies residues 240 to 394 (GLRQLVEQVV…HIQRSSHTIN (155 aa)). The region spanning 272-389 (SRTSFQRSAK…EERASHIQRS (118 aa)) is the LTD domain.

The protein belongs to the intermediate filament family.

This is Muscle cell intermediate filament protein AV71 (AV71) from Acanthocheilonema viteae (Filarial nematode worm).